Consider the following 339-residue polypeptide: Small ribosomal subunit biogenesis GTPase RsgA (339 aa).

The region spanning 111-271 (MRGLLKPVAA…LIDSPGIREF (161 aa)) is the CP-type G domain. Residues 159 to 162 (NKAD) and 213 to 221 (GQSGVGKSS) each bind GTP. Zn(2+) contacts are provided by Cys295, Cys300, His302, and Cys308.

The protein belongs to the TRAFAC class YlqF/YawG GTPase family. RsgA subfamily. As to quaternary structure, monomer. Associates with 30S ribosomal subunit, binds 16S rRNA. Requires Zn(2+) as cofactor.

The protein resides in the cytoplasm. One of several proteins that assist in the late maturation steps of the functional core of the 30S ribosomal subunit. Helps release RbfA from mature subunits. May play a role in the assembly of ribosomal proteins into the subunit. Circularly permuted GTPase that catalyzes slow GTP hydrolysis, GTPase activity is stimulated by the 30S ribosomal subunit. This is Small ribosomal subunit biogenesis GTPase RsgA from Pseudomonas aeruginosa (strain UCBPP-PA14).